The following is a 142-amino-acid chain: HTH-type transcriptional regulator MntR (142 aa).

An HTH dtxR-type domain is found at 1 to 63; the sequence is MPTPSMEDYI…YEKYRGLVLT (63 aa). Mn(2+)-binding residues include D8, E11, H77, E99, E102, and H103.

It belongs to the DtxR/MntR family. In terms of assembly, homodimer.

The protein localises to the cytoplasm. With respect to regulation, DNA binding is strongly activated by Mn(2+). Functionally, central regulator of manganese homeostasis. The protein is HTH-type transcriptional regulator MntR of Bacillus cereus (strain AH820).